A 608-amino-acid polypeptide reads, in one-letter code: Albumin (608 aa).

An N-terminal signal peptide occupies residues 1–18 (MKWVTFISLFFLFSSAYS). Positions 19 to 24 (RGLVRR) are excised as a propeptide. 3 consecutive Albumin domains span residues 19-210 (RGLV…EALR), 211-403 (EKVL…EFKP), and 404-601 (LVDE…KLVA). Residue serine 29 is modified to Phosphoserine. Positions 30 and 37 each coordinate Ca(2+). A disulfide bridge connects residues cysteine 77 and cysteine 86. Phosphoserine is present on residues serine 82 and serine 89. Histidine 91 contributes to the Zn(2+) binding site. Disulfide bonds link cysteine 99/cysteine 115, cysteine 114/cysteine 125, cysteine 148/cysteine 193, cysteine 192/cysteine 201, cysteine 224/cysteine 270, and cysteine 269/cysteine 277. Lysine 229 carries the N6-succinyllysine modification. Glutamate 268 lines the Ca(2+) pocket. Zn(2+) is bound by residues histidine 271 and aspartate 273. Residues aspartate 273, glutamate 276, aspartate 279, and aspartate 283 each coordinate Ca(2+). Cystine bridges form between cysteine 289–cysteine 303, cysteine 302–cysteine 313, cysteine 340–cysteine 385, cysteine 384–cysteine 393, cysteine 416–cysteine 462, cysteine 461–cysteine 472, cysteine 485–cysteine 501, and cysteine 500–cysteine 511. A Phosphoserine modification is found at serine 443. Threonine 444 and threonine 446 each carry phosphothreonine. Lysine 460 carries the post-translational modification N6-succinyllysine. A Phosphoserine modification is found at serine 513. Cystine bridges form between cysteine 538–cysteine 583 and cysteine 582–cysteine 591. N6-methyllysine is present on lysine 558. Position 570 is a phosphothreonine (threonine 570). The residue at position 588 (lysine 588) is an N6-succinyllysine.

The protein belongs to the ALB/AFP/VDB family. Interacts with FCGRT; this interaction regulates ALB homeostasis. Interacts with TASOR. In plasma, occurs in a covalently-linked complex with chromophore-bound alpha-1-microglobulin; this interaction does not prevent fatty acid binding to ALB. In terms of processing, phosphorylated by FAM20C in the extracellular medium. In terms of tissue distribution, plasma.

It localises to the secreted. Functionally, binds water, Ca(2+), Na(+), K(+), fatty acids, hormones, bilirubin and drugs. Its main function is the regulation of the colloidal osmotic pressure of blood. Major zinc transporter in plasma, typically binds about 80% of all plasma zinc. Major calcium and magnesium transporter in plasma, binds approximately 45% of circulating calcium and magnesium in plasma. Potentially has more than two calcium-binding sites and might additionally bind calcium in a non-specific manner. The shared binding site between zinc and calcium at residue Asp-273 suggests a crosstalk between zinc and calcium transport in the blood. The rank order of affinity is zinc &gt; calcium &gt; magnesium. Binds to the bacterial siderophore enterobactin and inhibits enterobactin-mediated iron uptake of E.coli from ferric transferrin, and may thereby limit the utilization of iron and growth of enteric bacteria such as E.coli. Does not prevent iron uptake by the bacterial siderophore aerobactin. The polypeptide is Albumin (ALB) (Canis lupus familiaris (Dog)).